A 241-amino-acid polypeptide reads, in one-letter code: Chloride intracellular channel protein 1 (241 aa).

Ala-2 bears the N-acetylalanine mark. Positions Ala-2 to Pro-90 are required for insertion into the membrane. Lys-13 is subject to N6-acetyllysine. Positions Cys-24–Ser-27 match the G-site motif. Cys-24 and Cys-59 form a disulfide bridge. Residues Phe-26–Val-46 form a helical membrane-spanning segment. A GST C-terminal domain is found at Tyr-93–Tyr-233. An N6-acetyllysine modification is found at Lys-119. Ser-121 bears the Phosphoserine mark. Residue Lys-131 is modified to N6-acetyllysine. Ser-156 bears the Phosphoserine mark. The residue at position 233 (Tyr-233) is a Phosphotyrosine.

Belongs to the chloride channel CLIC family. Monomer. Homodimer (in vitro). Interacts with TRAPPC2. Dimerization requires a conformation change that leads to the exposure of a large hydrophobic surface. In vivo, this may lead to membrane insertion.

The protein localises to the nucleus. It is found in the nucleus membrane. It localises to the cytoplasm. Its subcellular location is the cell membrane. The protein resides in the endoplasmic reticulum. It catalyses the reaction L-dehydroascorbate + 2 glutathione = glutathione disulfide + L-ascorbate. The enzyme catalyses chloride(in) = chloride(out). It carries out the reaction iodide(out) = iodide(in). The catalysed reaction is thiocyanate(in) = thiocyanate(out). It catalyses the reaction nitrate(in) = nitrate(out). The enzyme catalyses bromide(in) = bromide(out). It carries out the reaction fluoride(in) = fluoride(out). Functionally, in the soluble state, catalyzes glutaredoxin-like thiol disulfide exchange reactions with reduced glutathione as electron donor. Reduces selenite and dehydroascorbate and may act as an antioxidant during oxidative stress response. Can insert into membranes and form voltage-dependent multi-ion conductive channels. Membrane insertion seems to be redox-regulated and may occur only under oxidizing conditions. Involved in regulation of the cell cycle. In Bos taurus (Bovine), this protein is Chloride intracellular channel protein 1 (CLIC1).